Reading from the N-terminus, the 210-residue chain is RNA chaperone ProQ (210 aa).

Basic and acidic residues-rich tracts occupy residues 103–124 and 132–144; these read LKESKERVFASRRTNNKEEKAK and RKADAAAKSDKPK. Positions 103-148 are disordered; it reads LKESKERVFASRRTNNKEEKAKQPRRPAPRKADAAAKSDKPKAAPK.

The protein belongs to the ProQ family.

The protein resides in the cytoplasm. RNA chaperone with significant RNA binding, RNA strand exchange and RNA duplexing activities. The protein is RNA chaperone ProQ of Aeromonas salmonicida (strain A449).